A 130-amino-acid polypeptide reads, in one-letter code: Large ribosomal subunit protein bL12 (130 aa).

This sequence belongs to the bacterial ribosomal protein bL12 family. Homodimer. Part of the ribosomal stalk of the 50S ribosomal subunit. Forms a multimeric L10(L12)X complex, where L10 forms an elongated spine to which 2 to 4 L12 dimers bind in a sequential fashion. Binds GTP-bound translation factors.

Functionally, forms part of the ribosomal stalk which helps the ribosome interact with GTP-bound translation factors. Is thus essential for accurate translation. This Mycolicibacterium paratuberculosis (strain ATCC BAA-968 / K-10) (Mycobacterium paratuberculosis) protein is Large ribosomal subunit protein bL12.